Here is a 339-residue protein sequence, read N- to C-terminus: Uroporphyrinogen decarboxylase (339 aa).

Residues 21 to 25 (RQAGR), F40, D71, Y147, S202, and H315 contribute to the substrate site.

Belongs to the uroporphyrinogen decarboxylase family. As to quaternary structure, homodimer.

It is found in the cytoplasm. It catalyses the reaction uroporphyrinogen III + 4 H(+) = coproporphyrinogen III + 4 CO2. It participates in porphyrin-containing compound metabolism; protoporphyrin-IX biosynthesis; coproporphyrinogen-III from 5-aminolevulinate: step 4/4. Its function is as follows. Catalyzes the decarboxylation of four acetate groups of uroporphyrinogen-III to yield coproporphyrinogen-III. This Helicobacter pylori (strain ATCC 700392 / 26695) (Campylobacter pylori) protein is Uroporphyrinogen decarboxylase.